Reading from the N-terminus, the 191-residue chain is Prostaglandin-H2 D-isomerase (191 aa).

The N-terminal stretch at 1–28 is a signal peptide; sequence MATPNRLWMALLLLGVLGVLQTPAPAQA. The N-linked (GlcNAc...) asparagine glycan is linked to Asn-51. Cys-65 (nucleophile) is an active-site residue. Asn-78 carries an N-linked (GlcNAc...) asparagine glycan. Cys-89 and Cys-186 are disulfide-bonded.

It belongs to the calycin superfamily. Lipocalin family. As to quaternary structure, monomer. As to expression, in the male reproductive system, expressed in the testis, epididymis and prostate, and secreted into the seminal fluid.

It is found in the rough endoplasmic reticulum. The protein localises to the nucleus membrane. Its subcellular location is the golgi apparatus. The protein resides in the cytoplasm. It localises to the perinuclear region. It is found in the secreted. The catalysed reaction is prostaglandin H2 = prostaglandin D2. Its function is as follows. Catalyzes the conversion of PGH2 to PGD2, a prostaglandin involved in smooth muscle contraction/relaxation and a potent inhibitor of platelet aggregation. Involved in a variety of CNS functions, such as sedation, NREM sleep and PGE2-induced allodynia, and may have an anti-apoptotic role in oligodendrocytes. Binds small non-substrate lipophilic molecules, including biliverdin, bilirubin, retinal, retinoic acid and thyroid hormone, and may act as a scavenger for harmful hydrophobic molecules and as a secretory retinoid and thyroid hormone transporter. Possibly involved in development and maintenance of the blood-brain, blood-retina, blood-aqueous humor and blood-testis barrier. It is likely to play important roles in both maturation and maintenance of the central nervous system and male reproductive system. Involved in PLA2G3-dependent maturation of mast cells. PLA2G3 is secreted by immature mast cells and acts on nearby fibroblasts upstream to PTDGS to synthesize PGD2, which in turn promotes mast cell maturation and degranulation via PTGDR. The chain is Prostaglandin-H2 D-isomerase (PTGDS) from Bos taurus (Bovine).